The following is an 86-amino-acid chain: MGISIWQLLIILAIVLVLFGAKRLKNVGSDLGGAIKGFKKAVSDEDKKEDEKVTAEQKLEQKEGENVFDVKAEQKADEKSETKDKA.

The chain crosses the membrane as a helical span at residues 1-21 (MGISIWQLLIILAIVLVLFGA).

It belongs to the TatA/E family. In terms of assembly, the Tat system comprises two distinct complexes: a TatABC complex, containing multiple copies of TatA, TatB and TatC subunits, and a separate TatA complex, containing only TatA subunits. Substrates initially bind to the TatABC complex, which probably triggers association of the separate TatA complex to form the active translocon.

It is found in the cell inner membrane. In terms of biological role, part of the twin-arginine translocation (Tat) system that transports large folded proteins containing a characteristic twin-arginine motif in their signal peptide across membranes. TatA could form the protein-conducting channel of the Tat system. The sequence is that of Sec-independent protein translocase protein TatA from Hydrogenovibrio crunogenus (strain DSM 25203 / XCL-2) (Thiomicrospira crunogena).